We begin with the raw amino-acid sequence, 660 residues long: uncharacterized protein (660 aa).

Residues 1–660 are disordered; sequence MGTPCQSARG…RNPGCPRTWR (660 aa). Gly residues predominate over residues 67–80; the sequence is RPGGGNRVGAGRGR. Residues 104 to 116 show a composition bias toward polar residues; sequence SNPTGGCSDPQRS. 4 consecutive repeat copies span residues 149–273, 274–398, 399–523, and 524–648. Residues 149-648 are 4 X 125 AA tandem repeats; it reads SARNPGCPRT…THRRPPGCPR (500 aa). 4 stretches are compositionally biased toward low complexity: residues 177–196, 302–321, 427–446, and 552–571; these read RPSG…GTPA.

This is an uncharacterized protein from Homo sapiens (Human).